The following is a 205-amino-acid chain: Large ribosomal subunit protein uL3c (205 aa).

Positions 129-154 (SRGPMSHGSKNHRQPGSIGAGTTPGR) are disordered.

It belongs to the universal ribosomal protein uL3 family. As to quaternary structure, part of the 50S ribosomal subunit.

The protein localises to the plastid. The protein resides in the chloroplast. Functionally, one of the primary rRNA binding proteins, it binds directly near the 3'-end of the 23S rRNA, where it nucleates assembly of the 50S subunit. The sequence is that of Large ribosomal subunit protein uL3c (rpl3) from Pyropia yezoensis (Susabi-nori).